The chain runs to 296 residues: MTTITPIMVKELRERTGAAVMACKKALQETNGDMEAAIDLLRKAGDAKAAKRAGKTAAEGVIVIAISKDQKKGFMAEVNSETDFVARDTNFMAFASKVAERGLAEGVSDVAATLALPIEPNSSSTIEDERKALVNRIGENIQIRRVASLSSDGVVGHYSHGGRIGVLLALDVPNPELVKGLAMHVAAFNPQAVSANQVSTEFVEKEKEIFLARAQETGKPANIIEKMVKGQVEKLLKEVSLEGQSFVKDPEKLVGDLLKAEKAKVLAFLRFEVGEGVEKESQNFADEVMAQVQGNR.

The interval 82–85 is involved in Mg(2+) ion dislocation from EF-Tu; that stretch reads TDFV.

It belongs to the EF-Ts family.

The protein localises to the cytoplasm. Associates with the EF-Tu.GDP complex and induces the exchange of GDP to GTP. It remains bound to the aminoacyl-tRNA.EF-Tu.GTP complex up to the GTP hydrolysis stage on the ribosome. The sequence is that of Elongation factor Ts from Coxiella burnetii (strain CbuK_Q154) (Coxiella burnetii (strain Q154)).